Here is a 203-residue protein sequence, read N- to C-terminus: Small ribosomal subunit protein uS4 (203 aa).

Residues 93-156 (RRLDNVVYRL…LKVPAILEAV (64 aa)) enclose the S4 RNA-binding domain.

The protein belongs to the universal ribosomal protein uS4 family. As to quaternary structure, part of the 30S ribosomal subunit. Contacts protein S5. The interaction surface between S4 and S5 is involved in control of translational fidelity.

Its function is as follows. One of the primary rRNA binding proteins, it binds directly to 16S rRNA where it nucleates assembly of the body of the 30S subunit. With S5 and S12 plays an important role in translational accuracy. In Streptococcus gordonii (strain Challis / ATCC 35105 / BCRC 15272 / CH1 / DL1 / V288), this protein is Small ribosomal subunit protein uS4.